Reading from the N-terminus, the 163-residue chain is Phosphopantetheine adenylyltransferase (163 aa).

Thr-11 provides a ligand contact to substrate. ATP contacts are provided by residues 11 to 12 and His-19; that span reads TF. Substrate contacts are provided by Lys-43, Leu-75, and Arg-89. ATP contacts are provided by residues 90 to 92, Glu-100, and 125 to 131; these read GLR and YMFISAT.

It belongs to the bacterial CoaD family. As to quaternary structure, homohexamer. The cofactor is Mg(2+).

Its subcellular location is the cytoplasm. The catalysed reaction is (R)-4'-phosphopantetheine + ATP + H(+) = 3'-dephospho-CoA + diphosphate. It participates in cofactor biosynthesis; coenzyme A biosynthesis; CoA from (R)-pantothenate: step 4/5. Reversibly transfers an adenylyl group from ATP to 4'-phosphopantetheine, yielding dephospho-CoA (dPCoA) and pyrophosphate. The polypeptide is Phosphopantetheine adenylyltransferase (Azoarcus sp. (strain BH72)).